Here is a 549-residue protein sequence, read N- to C-terminus: MAYNNSVRKRKKDIQDANGFHRDQTIDKKSRATNKLEESLPTFKVFIVLFFIRLLNSLTIKTFFQADEYYQCLEPAYNFVFGSGYITWEWEEGIRSSIHPLIYALGYKMVSYVHFDDKPIILIPKVIGALIASIGEVYLYKFSKKFTKNEKLARLTLILSLLSPFNWYIITRSFSNSFEMVLTTIAFTYWPWDNVISYKDISMSCIIAFISCIVRPTNGIIWLYLGINFMIKNYKLEKQSGKLMKLILILSIELILILLVNTGLDYIFYGKTTFPLYNFVEFNVIRNLSIFYGVAPWHFYLFQGVPIILMTYLPWLLHSAIVLKKYKSLLGQVAILMIGGFSLIDHKEIRFIYPLQPIFMLMVAYSIHETKHKFQRLYKFLVPVIIILNLIIAIFFTQVHERGVIDIVQYLRNNPDIESFGFLTPCHSTPWQSHINNPNLVNKSWFLTCEPPLHLTTTSLKEIKSYRDESDQFYDNPAQFLSEHFQSFADSRNTGASNWPSRLIIFEPLENFMDDFLRGSNYFECERFFNSYFHWDDRRKGDIIVYCQI.

Topologically, residues 1 to 39 are cytoplasmic; it reads MAYNNSVRKRKKDIQDANGFHRDQTIDKKSRATNKLEES. The chain crosses the membrane as a helical span at residues 40–60; the sequence is LPTFKVFIVLFFIRLLNSLTI. Over 61 to 119 the chain is Lumenal; it reads KTFFQADEYYQCLEPAYNFVFGSGYITWEWEEGIRSSIHPLIYALGYKMVSYVHFDDKP. The chain crosses the membrane as a helical span at residues 120-140; it reads IILIPKVIGALIASIGEVYLY. The Cytoplasmic portion of the chain corresponds to 141 to 154; that stretch reads KFSKKFTKNEKLAR. A helical transmembrane segment spans residues 155 to 175; sequence LTLILSLLSPFNWYIITRSFS. The Lumenal portion of the chain corresponds to 176–205; the sequence is NSFEMVLTTIAFTYWPWDNVISYKDISMSC. A helical transmembrane segment spans residues 206–226; sequence IIAFISCIVRPTNGIIWLYLG. The Cytoplasmic segment spans residues 227-246; sequence INFMIKNYKLEKQSGKLMKL. The chain crosses the membrane as a helical span at residues 247-267; sequence ILILSIELILILLVNTGLDYI. Topologically, residues 268–289 are lumenal; it reads FYGKTTFPLYNFVEFNVIRNLS. N-linked (GlcNAc...) asparagine glycosylation occurs at Asn287. Residues 290–310 traverse the membrane as a helical segment; that stretch reads IFYGVAPWHFYLFQGVPIILM. The Cytoplasmic segment spans residues 311–328; sequence TYLPWLLHSAIVLKKYKS. Residues 329–349 form a helical membrane-spanning segment; that stretch reads LLGQVAILMIGGFSLIDHKEI. Residue Arg350 is a topological domain, lumenal. Residues 351-367 traverse the membrane as a helical segment; that stretch reads FIYPLQPIFMLMVAYSI. Residues 368–379 are Cytoplasmic-facing; that stretch reads HETKHKFQRLYK. A helical transmembrane segment spans residues 380-400; sequence FLVPVIIILNLIIAIFFTQVH. Residues 401-549 lie on the Lumenal side of the membrane; the sequence is ERGVIDIVQY…KGDIIVYCQI (149 aa). N-linked (GlcNAc...) asparagine glycosylation occurs at Asn442.

Belongs to the glycosyltransferase 22 family. PIGB subfamily.

It localises to the endoplasmic reticulum membrane. It functions in the pathway glycolipid biosynthesis; glycosylphosphatidylinositol-anchor biosynthesis. In terms of biological role, mannosyltransferase involved in glycosylphosphatidylinositol-anchor biosynthesis. Transfers the third mannose to Man2-GlcN-acyl-PI during GPI precursor assembly. The sequence is that of GPI mannosyltransferase 3 (GPI10) from Debaryomyces hansenii (strain ATCC 36239 / CBS 767 / BCRC 21394 / JCM 1990 / NBRC 0083 / IGC 2968) (Yeast).